We begin with the raw amino-acid sequence, 440 residues long: 2-methylisoborneol synthase (440 aa).

Disordered regions lie at residues 1 to 33 (MPDS…IPSA) and 46 to 74 (LHPP…TVTG). Composition is skewed to pro residues over residues 9–29 (TPPP…PAPV) and 50–63 (VTVP…PPAP). Positions 197, 198, 202, 345, 349, and 353 each coordinate Mg(2+).

Belongs to the terpene synthase family. 2-methylisoborneol synthase subfamily. The cofactor is Mg(2+).

The catalysed reaction is (E)-2-methylgeranyl diphosphate + H2O = 2-methylisoborneol + diphosphate. In terms of biological role, catalyzes the cyclization of 2-methylgeranyl diphosphate (2-MeGPP) to 2-methylisoborneol (2-MIB), which likely involves the intermediacy of 2-methyllinalyl diphosphate. Is also able to catalyze the cyclization of geranyl diphosphate (GPP), albeit with much lower efficiency, leading to the formation of a complex mixture of cyclic monoterpenes, consisting of alpha-pinene (6%), beta-pinene (23%), limonene (32%), gamma-terpinene (29%), and delta-terpinene (10%). The protein is 2-methylisoborneol synthase of Streptomyces coelicolor (strain ATCC BAA-471 / A3(2) / M145).